Reading from the N-terminus, the 204-residue chain is Thiamine-phosphate synthase (204 aa).

4-amino-2-methyl-5-(diphosphooxymethyl)pyrimidine-binding positions include 35–39 (QVREK) and Asn-67. Mg(2+) is bound by residues Asp-68 and Asp-87. Residue Ser-106 participates in 4-amino-2-methyl-5-(diphosphooxymethyl)pyrimidine binding. 132-134 (TPT) is a binding site for 2-[(2R,5Z)-2-carboxy-4-methylthiazol-5(2H)-ylidene]ethyl phosphate. A 4-amino-2-methyl-5-(diphosphooxymethyl)pyrimidine-binding site is contributed by Lys-135. 2-[(2R,5Z)-2-carboxy-4-methylthiazol-5(2H)-ylidene]ethyl phosphate is bound by residues Gly-163 and 183–184 (VS).

This sequence belongs to the thiamine-phosphate synthase family. Requires Mg(2+) as cofactor.

The enzyme catalyses 2-[(2R,5Z)-2-carboxy-4-methylthiazol-5(2H)-ylidene]ethyl phosphate + 4-amino-2-methyl-5-(diphosphooxymethyl)pyrimidine + 2 H(+) = thiamine phosphate + CO2 + diphosphate. The catalysed reaction is 2-(2-carboxy-4-methylthiazol-5-yl)ethyl phosphate + 4-amino-2-methyl-5-(diphosphooxymethyl)pyrimidine + 2 H(+) = thiamine phosphate + CO2 + diphosphate. It catalyses the reaction 4-methyl-5-(2-phosphooxyethyl)-thiazole + 4-amino-2-methyl-5-(diphosphooxymethyl)pyrimidine + H(+) = thiamine phosphate + diphosphate. Its pathway is cofactor biosynthesis; thiamine diphosphate biosynthesis; thiamine phosphate from 4-amino-2-methyl-5-diphosphomethylpyrimidine and 4-methyl-5-(2-phosphoethyl)-thiazole: step 1/1. Condenses 4-methyl-5-(beta-hydroxyethyl)thiazole monophosphate (THZ-P) and 2-methyl-4-amino-5-hydroxymethyl pyrimidine pyrophosphate (HMP-PP) to form thiamine monophosphate (TMP). This chain is Thiamine-phosphate synthase, found in Vibrio campbellii (strain ATCC BAA-1116).